The primary structure comprises 496 residues: Transactivator/viroplasmin protein (496 aa).

Residues 102–128 (RPNQGIQIPKKNEDHSSSSSKEEKGIQ) form a disordered region. Residues 111–128 (KKNEDHSSSSSKEEKGIQ) show a composition bias toward basic and acidic residues.

Belongs to the caulimoviridae viroplasmin family.

It is found in the host cytoplasm. Functionally, enhances the translation of downstream ORFs on polycistronic mRNAs derived from carnation etched ring virus. In Dianthus caryophyllus (Carnation), this protein is Transactivator/viroplasmin protein.